We begin with the raw amino-acid sequence, 386 residues long: 23S rRNA (uracil(747)-C(5))-methyltransferase RlmC (386 aa).

4 residues coordinate [4Fe-4S] cluster: C7, C15, C18, and C94. S-adenosyl-L-methionine is bound by residues Q219, F248, E269, and N316. C343 serves as the catalytic Nucleophile.

It belongs to the class I-like SAM-binding methyltransferase superfamily. RNA M5U methyltransferase family. RlmC subfamily.

The enzyme catalyses uridine(747) in 23S rRNA + S-adenosyl-L-methionine = 5-methyluridine(747) in 23S rRNA + S-adenosyl-L-homocysteine + H(+). Its function is as follows. Catalyzes the formation of 5-methyl-uridine at position 747 (m5U747) in 23S rRNA. The protein is 23S rRNA (uracil(747)-C(5))-methyltransferase RlmC of Shewanella oneidensis (strain ATCC 700550 / JCM 31522 / CIP 106686 / LMG 19005 / NCIMB 14063 / MR-1).